A 337-amino-acid polypeptide reads, in one-letter code: Lipoyl synthase (337 aa).

Positions 81, 86, 92, 107, 111, 114, and 323 each coordinate [4Fe-4S] cluster. The region spanning 93–312 (FSHGTATFMI…EDYGNALGFS (220 aa)) is the Radical SAM core domain.

Belongs to the radical SAM superfamily. Lipoyl synthase family. [4Fe-4S] cluster serves as cofactor.

Its subcellular location is the cytoplasm. It catalyses the reaction [[Fe-S] cluster scaffold protein carrying a second [4Fe-4S](2+) cluster] + N(6)-octanoyl-L-lysyl-[protein] + 2 oxidized [2Fe-2S]-[ferredoxin] + 2 S-adenosyl-L-methionine + 4 H(+) = [[Fe-S] cluster scaffold protein] + N(6)-[(R)-dihydrolipoyl]-L-lysyl-[protein] + 4 Fe(3+) + 2 hydrogen sulfide + 2 5'-deoxyadenosine + 2 L-methionine + 2 reduced [2Fe-2S]-[ferredoxin]. Its pathway is protein modification; protein lipoylation via endogenous pathway; protein N(6)-(lipoyl)lysine from octanoyl-[acyl-carrier-protein]: step 2/2. In terms of biological role, catalyzes the radical-mediated insertion of two sulfur atoms into the C-6 and C-8 positions of the octanoyl moiety bound to the lipoyl domains of lipoate-dependent enzymes, thereby converting the octanoylated domains into lipoylated derivatives. This Xanthomonas axonopodis pv. citri (strain 306) protein is Lipoyl synthase.